An 87-amino-acid polypeptide reads, in one-letter code: UPF0250 protein CKO_02527 (87 aa).

Belongs to the UPF0250 family.

The sequence is that of UPF0250 protein CKO_02527 from Citrobacter koseri (strain ATCC BAA-895 / CDC 4225-83 / SGSC4696).